Here is a 405-residue protein sequence, read N- to C-terminus: MEPETKKTKTDSKKIVLLGGDFCGPEVIAEAVKVLKSVAEASGTEFVFEDRLIGGAAIEKEGEPITDATLDICRKADSIMLGAVGGAANTVWTTPDGRTDVRPEQGLLKLRKDLNLYANLRPCQLLSPKLADLSPIRNVEGTDFIIVRELVGGIYFGERKEDDGSGVASDTETYSVPEVERIARMAAFLALQHNPPLPVWSLDKANVLASSRLWRKTVTRVLKDEFPQLELNHQLIDSAAMILIKQPSKMNGIIITTNMFGDIISDEASVIPGSLGLLPSASLASLPDTNEAFGLYEPCHGSAPDLGKQKVNPIATILSAAMMLKFSLNMKPAGDAVEAAVKESVEAGITTADIGGSSSTSEVGDLLPTRSRSCSRRSKSFLRRIDGRSKLTRLRVGLPAGSASV.

86-104 lines the NAD(+) pocket; it reads GAANTVWTTPDGRTDVRPE. Substrate is bound by residues Arg-111, Arg-121, Arg-148, and Asp-237. Residues Asp-237, Asp-262, and Asp-266 each coordinate Mg(2+). 301–312 provides a ligand contact to NAD(+); that stretch reads GSAPDLGKQKVN. Residues 352–371 are disordered; the sequence is ADIGGSSSTSEVGDLLPTRS.

This sequence belongs to the isocitrate and isopropylmalate dehydrogenases family. As to quaternary structure, homodimer. Requires Mg(2+) as cofactor. The cofactor is Mn(2+).

The protein localises to the cytoplasm. The catalysed reaction is (2R,3S)-3-isopropylmalate + NAD(+) = 4-methyl-2-oxopentanoate + CO2 + NADH. It participates in amino-acid biosynthesis; L-leucine biosynthesis; L-leucine from 3-methyl-2-oxobutanoate: step 3/4. Functionally, catalyzes the oxidation of 3-carboxy-2-hydroxy-4-methylpentanoate (3-isopropylmalate) to 3-carboxy-4-methyl-2-oxopentanoate. The product decarboxylates to 4-methyl-2 oxopentanoate. The sequence is that of 3-isopropylmalate dehydrogenase (LEU2) from Yarrowia lipolytica (strain CLIB 122 / E 150) (Yeast).